Here is a 396-residue protein sequence, read N- to C-terminus: 3-amino-4-hydroxybenzoic acid synthase (396 aa).

The interval M1–S29 is disordered.

The protein belongs to the archaeal-type DHQ synthase family. GriH subfamily. In terms of assembly, monomer. Requires Mn(2+) as cofactor.

The enzyme catalyses 2-amino-4,5-dihydroxy-6-oxo-7-(phosphooxy)heptanoate = 3-amino-4-hydroxybenzoate + phosphate + 2 H2O + H(+). Catalyzes the cyclization of 2-amino-4,5-dihydroxy-6-one-heptanoic acid-7-phosphate to yield 3-amino-4-hydroxybenzoic acid (3,4-AHBA). The protein is 3-amino-4-hydroxybenzoic acid synthase (griH) of Streptomyces griseus subsp. griseus (strain JCM 4626 / CBS 651.72 / NBRC 13350 / KCC S-0626 / ISP 5235).